The chain runs to 210 residues: Putative truncated L-serine dehydratase SDL1 (210 aa).

This sequence belongs to the serine/threonine dehydratase family. It depends on pyridoxal 5'-phosphate as a cofactor.

It localises to the cytoplasm. The enzyme catalyses L-serine = pyruvate + NH4(+). The protein operates within carbohydrate biosynthesis; gluconeogenesis. This is Putative truncated L-serine dehydratase SDL1 (SDL1) from Saccharomyces cerevisiae (strain ATCC 204508 / S288c) (Baker's yeast).